A 112-amino-acid chain; its full sequence is Gastrula zinc finger protein XlCGF9.1 (112 aa).

C2H2-type zinc fingers lie at residues 6-28, 34-56, 62-84, and 90-112; these read FICSDCGKCFNDSSILIRHMKIH, FCCPQCGRKFRRRAHLIVHERTH, FTCPECGKSFARRSHLMDHRIIH, and YSCPECGKCFGLQGYLNKHFKIH.

Belongs to the krueppel C2H2-type zinc-finger protein family.

Its subcellular location is the nucleus. Functionally, may be involved in transcriptional regulation. The sequence is that of Gastrula zinc finger protein XlCGF9.1 from Xenopus laevis (African clawed frog).